A 409-amino-acid polypeptide reads, in one-letter code: Pyrophosphate--fructose 6-phosphate 1-phosphotransferase (409 aa).

G14 is a binding site for diphosphate. Position 123 (D123) interacts with Mg(2+). Residues 151-153, 196-198, E268, and 325-328 contribute to the substrate site; these read TID, MGR, and YFAR. The active-site Proton acceptor is D153.

Belongs to the phosphofructokinase type A (PFKA) family. PPi-dependent PFK group II subfamily. Clade 'P' sub-subfamily. Homotetramer. The cofactor is Mg(2+).

The protein localises to the cytoplasm. The enzyme catalyses beta-D-fructose 6-phosphate + diphosphate = beta-D-fructose 1,6-bisphosphate + phosphate + H(+). It functions in the pathway carbohydrate degradation; glycolysis; D-glyceraldehyde 3-phosphate and glycerone phosphate from D-glucose: step 3/4. Non-allosteric. In terms of biological role, catalyzes the phosphorylation of D-fructose 6-phosphate, the first committing step of glycolysis. Uses inorganic phosphate (PPi) as phosphoryl donor instead of ATP like common ATP-dependent phosphofructokinases (ATP-PFKs), which renders the reaction reversible, and can thus function both in glycolysis and gluconeogenesis. Consistently, PPi-PFK can replace the enzymes of both the forward (ATP-PFK) and reverse (fructose-bisphosphatase (FBPase)) reactions. This chain is Pyrophosphate--fructose 6-phosphate 1-phosphotransferase, found in Methylotuvimicrobium alcaliphilum (strain DSM 19304 / NCIMB 14124 / VKM B-2133 / 20Z) (Methylomicrobium alcaliphilum).